The sequence spans 297 residues: Sirohydrochlorin cobaltochelatase CbiKP (297 aa).

Positions 1–28 are cleaved as a signal peptide; that stretch reads MSRHPMVTRLLCLVFSCLIILACSPAFA. Residue H124 participates in heme binding. H182 (proton acceptor) is an active-site residue. Residues H182, E212, and H244 each contribute to the Co(2+) site.

Belongs to the CbiK family. In terms of assembly, homotetramer; dimer of dimers.

The protein resides in the periplasm. It catalyses the reaction Co-sirohydrochlorin + 2 H(+) = sirohydrochlorin + Co(2+). The catalysed reaction is siroheme + 2 H(+) = sirohydrochlorin + Fe(2+). Its function is as follows. Catalyzes the insertion of Co(2+) into sirohydrochlorin. To a lesser extent, is also able to insert Fe(2+) into sirohydrochlorin, yielding siroheme. Its periplasmic location means that it cannot participate in cobalamin biosynthesis and its genomic environment suggests it is likely to be associated with a heme or metal transport system. The sequence is that of Sirohydrochlorin cobaltochelatase CbiKP (cbiKp) from Nitratidesulfovibrio vulgaris (strain ATCC 29579 / DSM 644 / CCUG 34227 / NCIMB 8303 / VKM B-1760 / Hildenborough) (Desulfovibrio vulgaris).